Here is a 370-residue protein sequence, read N- to C-terminus: DNA replication and repair protein RecF (370 aa).

30–37 contacts ATP; that stretch reads GENAQGKT.

This sequence belongs to the RecF family.

It localises to the cytoplasm. Functionally, the RecF protein is involved in DNA metabolism; it is required for DNA replication and normal SOS inducibility. RecF binds preferentially to single-stranded, linear DNA. It also seems to bind ATP. This chain is DNA replication and repair protein RecF, found in Staphylococcus aureus (strain bovine RF122 / ET3-1).